The chain runs to 631 residues: MSLIEGDSIYNLFQTQDLGIDFASSIVPDSPNKFKKNANVFNNFQQQQQQIQQQNKQSNGLIYNNNNNNNNNNNNNNNNSSSSNNNNNSSSSNNNNNSNNNNQNHNNNNNNQNHNNIQHNNAQSQVYINHNSNGSQQEEQLFSIYLQPEKENELNNSYHDNVNNNNNNNNNNNNNNNNINLNHAQQQQQQHHLPHGQPHNNNNNNQFYQIKNPMEEIYSSNGIVPNQEPNKKVEYMNEPIKQNHYNIVPESIFDVPFGVSSQTMLNVPSTNNANNNNNNNNNNNNNNKNINFKQPIQPNQLIPIPPHSNQNNNISLNNNNSNSNSNPNNNNNNSNNISTQINNLNNNINNQNNQLNGSNNGKKKEEDKSIKKRKFISSTPVKGENGGTTLIPTTDGGFNMDEERHQKRQRRLVKNREAAQLFRQRQKAYIQDLEKKVSDLTGTNSEFRARVELLNSENKLIREQLLYLRNFVTQAVSFSFPKGGSNGTNSPSGVADQFLNSILPPGLNSPLPQGILPAGMNLQNPMIMSAIAEAASKNSTFRQNIQGNLLGTPIPSPQSSLTSNSGNNSPNKPLNNNNNNNNINNNNNNNPSSPNNNLNNNNNISPNSSTSHQVPYLPQNTPPQQSTPNQR.

The stretch at 35 to 62 (KKNANVFNNFQQQQQQIQQQNKQSNGLI) forms a coiled coil. Disordered regions lie at residues 46-117 (QQQQ…HNNI), 154-207 (LNNS…NNQF), and 264-406 (MLNV…ERHQ). 2 stretches are compositionally biased toward low complexity: residues 155-206 (NNSY…NNNQ) and 271-360 (NNAN…GSNN). The stretch at 328–366 (NNNNNNSNNISTQINNLNNNINNQNNQLNGSNNGKKKEE) forms a coiled coil. Positions 405-468 (HQKRQRRLVK…KLIREQLLYL (64 aa)) constitute a bZIP domain. Residues 407 to 427 (KRQRRLVKNREAAQLFRQRQK) are basic motif. The tract at residues 433–440 (LEKKVSDL) is leucine-zipper. The segment at 546 to 631 (QGNLLGTPIP…PPQQSTPNQR (86 aa)) is disordered. Composition is skewed to low complexity over residues 563–609 (SNSG…PNSS) and 618–631 (PQNT…PNQR).

It belongs to the bZIP family.

Its subcellular location is the nucleus. Probable transcriptional regulator. This chain is Probable basic-leucine zipper transcription factor F (bzpF), found in Dictyostelium discoideum (Social amoeba).